A 714-amino-acid chain; its full sequence is Fatty acid oxidation complex subunit alpha (714 aa).

Residues 1–190 (MEMASAFTLN…KLGLVDDVVP (190 aa)) are enoyl-CoA hydratase. The tract at residues 306–714 (APLNSVGILG…FWKTTATDLQ (409 aa)) is 3-hydroxyacyl-CoA dehydrogenase.

The protein in the N-terminal section; belongs to the enoyl-CoA hydratase/isomerase family. This sequence in the central section; belongs to the 3-hydroxyacyl-CoA dehydrogenase family. Heterotetramer of two alpha chains (FadJ) and two beta chains (FadI).

The protein localises to the cytoplasm. The enzyme catalyses a (3S)-3-hydroxyacyl-CoA = a (2E)-enoyl-CoA + H2O. It carries out the reaction a 4-saturated-(3S)-3-hydroxyacyl-CoA = a (3E)-enoyl-CoA + H2O. It catalyses the reaction a (3S)-3-hydroxyacyl-CoA + NAD(+) = a 3-oxoacyl-CoA + NADH + H(+). The catalysed reaction is (3S)-3-hydroxybutanoyl-CoA = (3R)-3-hydroxybutanoyl-CoA. It participates in lipid metabolism; fatty acid beta-oxidation. In terms of biological role, catalyzes the formation of a hydroxyacyl-CoA by addition of water on enoyl-CoA. Also exhibits 3-hydroxyacyl-CoA epimerase and 3-hydroxyacyl-CoA dehydrogenase activities. The polypeptide is Fatty acid oxidation complex subunit alpha (Escherichia coli O6:H1 (strain CFT073 / ATCC 700928 / UPEC)).